The sequence spans 170 residues: MAQLRWGRKGVRSQRRKYSRPVAYKPPSSKVVSHVETVLNKKDVTGAEMKPFNDGSRYSMKKIMVSATLTMAPGELLNYLIVKSNSPIANWSSSFSNPSLMVKESVQDTVTILRRGKLESSGTAGKDVTKSFSRFVNLGLGISQTQHLYLIIYSSDAMKITLETRMYIDV.

A compositionally biased stretch (basic residues) spans 1 to 19; that stretch reads MAQLRWGRKGVRSQRRKYS. A disordered region spans residues 1 to 25; sequence MAQLRWGRKGVRSQRRKYSRPVAYK.

The protein belongs to the nanoviridae capsid protein family.

It is found in the virion. The polypeptide is Capsid protein (DNA-S) (Subterranean clover stunt virus (strain J) (SCSV)).